A 140-amino-acid polypeptide reads, in one-letter code: Organic hydroperoxide resistance protein-like 1 (140 aa).

Belongs to the OsmC/Ohr family.

In Staphylococcus epidermidis (strain ATCC 35984 / DSM 28319 / BCRC 17069 / CCUG 31568 / BM 3577 / RP62A), this protein is Organic hydroperoxide resistance protein-like 1.